The following is a 301-amino-acid chain: Tyrosine recombinase XerD (301 aa).

The 84-residue stretch at 7–90 folds into the Core-binding (CB) domain; the sequence is QFHTTILEQF…ALKVFFLFLK (84 aa). One can recognise a Tyr recombinase domain in the interval 109–294; sequence RLPSVLTPQE…AADSLIEKFL (186 aa). Active-site residues include Arg-153, Lys-175, His-246, Arg-249, and His-272. Residue Tyr-281 is the O-(3'-phospho-DNA)-tyrosine intermediate of the active site.

This sequence belongs to the 'phage' integrase family. XerD subfamily. As to quaternary structure, forms a cyclic heterotetrameric complex composed of two molecules of XerC and two molecules of XerD.

It is found in the cytoplasm. Functionally, site-specific tyrosine recombinase, which acts by catalyzing the cutting and rejoining of the recombining DNA molecules. The XerC-XerD complex is essential to convert dimers of the bacterial chromosome into monomers to permit their segregation at cell division. It also contributes to the segregational stability of plasmids. The polypeptide is Tyrosine recombinase XerD (Chlamydia pneumoniae (Chlamydophila pneumoniae)).